A 322-amino-acid chain; its full sequence is Phosphatidylserine decarboxylase proenzyme (322 aa).

Catalysis depends on charge relay system; for autoendoproteolytic cleavage activity residues D90, H147, and S254. S254 serves as the catalytic Schiff-base intermediate with substrate; via pyruvic acid; for decarboxylase activity. S254 bears the Pyruvic acid (Ser); by autocatalysis mark. A disordered region spans residues 293 to 322 (PDAEPAPLPAEEIEAEHDASPLVDDKKDQV). Positions 308–322 (EHDASPLVDDKKDQV) are enriched in basic and acidic residues.

It belongs to the phosphatidylserine decarboxylase family. PSD-B subfamily. Prokaryotic type I sub-subfamily. Heterodimer of a large membrane-associated beta subunit and a small pyruvoyl-containing alpha subunit. Requires pyruvate as cofactor. Is synthesized initially as an inactive proenzyme. Formation of the active enzyme involves a self-maturation process in which the active site pyruvoyl group is generated from an internal serine residue via an autocatalytic post-translational modification. Two non-identical subunits are generated from the proenzyme in this reaction, and the pyruvate is formed at the N-terminus of the alpha chain, which is derived from the carboxyl end of the proenzyme. The autoendoproteolytic cleavage occurs by a canonical serine protease mechanism, in which the side chain hydroxyl group of the serine supplies its oxygen atom to form the C-terminus of the beta chain, while the remainder of the serine residue undergoes an oxidative deamination to produce ammonia and the pyruvoyl prosthetic group on the alpha chain. During this reaction, the Ser that is part of the protease active site of the proenzyme becomes the pyruvoyl prosthetic group, which constitutes an essential element of the active site of the mature decarboxylase.

The protein localises to the cell membrane. The catalysed reaction is a 1,2-diacyl-sn-glycero-3-phospho-L-serine + H(+) = a 1,2-diacyl-sn-glycero-3-phosphoethanolamine + CO2. The protein operates within phospholipid metabolism; phosphatidylethanolamine biosynthesis; phosphatidylethanolamine from CDP-diacylglycerol: step 2/2. Functionally, catalyzes the formation of phosphatidylethanolamine (PtdEtn) from phosphatidylserine (PtdSer). The sequence is that of Phosphatidylserine decarboxylase proenzyme from Escherichia coli O9:H4 (strain HS).